A 264-amino-acid polypeptide reads, in one-letter code: Putative serine carboxypeptidase-like 53 (264 aa).

Positions 1–23 are cleaved as a signal peptide; sequence MGKLQDWSITTCLFLFFLHASQT. Residues asparagine 65, asparagine 101, asparagine 153, and asparagine 184 are each glycosylated (N-linked (GlcNAc...) asparagine).

It belongs to the peptidase S10 family.

The protein localises to the secreted. In Arabidopsis thaliana (Mouse-ear cress), this protein is Putative serine carboxypeptidase-like 53 (SCPL53).